Consider the following 373-residue polypeptide: Leucine-, isoleucine-, valine-, threonine-, and alanine-binding protein (373 aa).

A signal peptide spans 1–26; the sequence is MKKGTQRLSRLFAAMAIAGFASYSMA. Cys-80 and Cys-105 are oxidised to a cystine.

It belongs to the leucine-binding protein family.

The protein localises to the periplasm. Functionally, component of the high-affinity leucine, isoleucine, valine transport system I (LIV-I), which is operative without Na(+) and is specific for alanine and threonine, in addition to branched-chain amino acids. Binds L-leucine, L-isoleucine, L-valine, L-threonine and L-alanine with nanomolar affinities. Can also bind L-homoserine with high affinity. This chain is Leucine-, isoleucine-, valine-, threonine-, and alanine-binding protein (braC), found in Pseudomonas aeruginosa (strain ATCC 15692 / DSM 22644 / CIP 104116 / JCM 14847 / LMG 12228 / 1C / PRS 101 / PAO1).